The primary structure comprises 153 residues: Ribosome maturation factor RimP (153 aa).

It belongs to the RimP family.

It localises to the cytoplasm. Required for maturation of 30S ribosomal subunits. The sequence is that of Ribosome maturation factor RimP from Clostridioides difficile (strain 630) (Peptoclostridium difficile).